Here is a 283-residue protein sequence, read N- to C-terminus: Undecaprenyl-diphosphatase (283 aa).

7 helical membrane passes run 40–60 (GAAF…IYFF), 85–105 (AKMG…GLLF), 113–133 (LRSL…LTIA), 153–173 (IGWK…IPGS), 193–213 (AARF…VFQL), 227–247 (LIAI…SIAF), and 259–279 (VFII…ATGM).

Belongs to the UppP family.

The protein resides in the cell inner membrane. It catalyses the reaction di-trans,octa-cis-undecaprenyl diphosphate + H2O = di-trans,octa-cis-undecaprenyl phosphate + phosphate + H(+). Catalyzes the dephosphorylation of undecaprenyl diphosphate (UPP). Confers resistance to bacitracin. The protein is Undecaprenyl-diphosphatase of Chlorobium limicola (strain DSM 245 / NBRC 103803 / 6330).